Here is a 552-residue protein sequence, read N- to C-terminus: Kumamolisin (552 aa).

A compositionally biased stretch (basic and acidic residues) spans 1 to 17 (MSDMEKPWKEEEKREVL). The tract at residues 1–34 (MSDMEKPWKEEEKREVLAGHARRQAPQAVDKGPV) is disordered. The 354-residue stretch at 193–546 (AYTPLDVAQA…IRLLQALLPS (354 aa)) folds into the Peptidase S53 domain. Active-site charge relay system residues include glutamate 266, aspartate 270, and serine 466. Ca(2+) is bound by residues aspartate 504, isoleucine 505, glycine 522, glycine 524, and aspartate 526.

In terms of assembly, forms monomeric and dimeric crystals. Ca(2+) serves as cofactor. Post-translationally, autocatalytically processed.

The protein localises to the secreted. It carries out the reaction The enzyme preferentially hydrolyzes peptides having an Ala or Pro residue at P2 position and prefers such charged amino acid residues as Glu or Arg at the P2' position. In the oxidized insulin B chain, kumamolysin preferentially cleaves between Leu(15) and Tyr(16).. With respect to regulation, inactivated at 22.4 and 37 degrees Celsius, but not at 60 degrees Celsius, by aldehyde-type inhibitors such as acetyl-Ile-Ala-Phe-CHO and acetyl-Ile-Pro-Phe-CHO. Insensitive to the known carboxyl proteinase inhibitors pepstatin, diazoacetyl-DL-norleucine methyl ester (DAN) and 1,2-epoxy-3-(p-nitrophenoxy)propane (EPNP). Not inhibited by Ala-Ala-Phe-chloromethylketone, an inhibitor of the human tripeptidyl-peptidase 1. Its function is as follows. Thermostable pepstatin-insensitive serine-carboxyl proteinase. Preferentially hydrolyzes synthetic peptides having an Ala or Pro residue at the P2 position and charged amino acids such as Glu or Arg at the P2' position. In vitro, specifically hydrolyzes the Leu-15-Tyr-16 peptide bond in oxidized insulin B-chain. Additional cleavage of oxidized insulin B-chain at Phe-25-Tyr-26 is detected at a considerably lower rate. Can hydrolyze collagen and the chromogenic substrate azocoll. Shows lower activity with albumin and casein. Shows very weak tripeptidyl peptidase activity. The sequence is that of Kumamolisin from Bacillus sp. (strain MN-32).